A 278-amino-acid chain; its full sequence is Phosphonates import ATP-binding protein PhnC 2 (278 aa).

One can recognise an ABC transporter domain in the interval 5-253; that stretch reads IRVDSLNKTF…FLNELYGAEG (249 aa). ATP is bound at residue 37–44; the sequence is GASGSGKS.

Belongs to the ABC transporter superfamily. Phosphonates importer (TC 3.A.1.9.1) family. As to quaternary structure, the complex is composed of two ATP-binding proteins (PhnC), two transmembrane proteins (PhnE) and a solute-binding protein (PhnD).

The protein localises to the cell inner membrane. The catalysed reaction is phosphonate(out) + ATP + H2O = phosphonate(in) + ADP + phosphate + H(+). Its function is as follows. Part of the ABC transporter complex PhnCDE involved in phosphonates import. Responsible for energy coupling to the transport system. This chain is Phosphonates import ATP-binding protein PhnC 2, found in Pseudomonas aeruginosa (strain ATCC 15692 / DSM 22644 / CIP 104116 / JCM 14847 / LMG 12228 / 1C / PRS 101 / PAO1).